We begin with the raw amino-acid sequence, 265 residues long: uncharacterized protein (265 aa).

The N-terminal stretch at 1–22 is a signal peptide; sequence MGYFKRVLLYIIVMVLSVFIIG. C23 is lipidated: N-palmitoyl cysteine. A lipid anchor (S-diacylglycerol cysteine) is attached at C23.

The protein belongs to the staphylococcal tandem lipoprotein family.

Its subcellular location is the cell membrane. This is an uncharacterized protein from Staphylococcus aureus (strain MSSA476).